The sequence spans 938 residues: Ubiquitin carboxyl-terminal hydrolase Usp2 (938 aa).

6 disordered regions span residues 1–53, 91–117, 130–254, 273–297, 360–410, and 500–610; these read MMLD…KVGA, KVKT…NTSR, FNGN…ISTT, EQNQ…HRYP, LSGQ…NLQQ, and KDAT…EKSE. A compositionally biased stretch (low complexity) spans 22–36; that stretch reads STTKTSSVVATSASS. Low complexity-rich tracts occupy residues 137–158, 167–177, 198–227, and 275–289; these read TTTN…NTSN, STTATATSTST, MNGH…QRQQ, and NQVQ…PSSS. A compositionally biased stretch (polar residues) spans 392-410; it reads ASRSNHGSQAGGSSSNLQQ. 2 stretches are compositionally biased toward low complexity: residues 502-555 and 574-583; these read ATTA…TARS and TSRSSIGTSS. Over residues 592 to 610 the composition is skewed to basic and acidic residues; the sequence is HNSDDGYKTASSSRDEKSE. The 326-residue stretch at 613-938 folds into the USP domain; sequence CGLRNIGNTC…SAYILFYERT (326 aa). Cys-622 serves as the catalytic Nucleophile. The Zn(2+) site is built by Cys-765, Cys-768, Cys-814, and Cys-817. His-895 acts as the Proton acceptor in catalysis.

It belongs to the peptidase C19 family. Interacts (via N-terminus) with imd (via N-terminus). Interacts with Rpt6.

The catalysed reaction is Thiol-dependent hydrolysis of ester, thioester, amide, peptide and isopeptide bonds formed by the C-terminal Gly of ubiquitin (a 76-residue protein attached to proteins as an intracellular targeting signal).. In terms of biological role, hydrolase that deubiquitinates polyubiquitinated target proteins. Required for preventing the activation of the Toll signaling cascades under unchallenged conditions. Essential for bodily calcium homeostasis. Required for preventing the activation of the immune deficiency (Imd) signaling cascade under unchallenged conditions. Regulates the Imd pathway by specifically removing 'Lys-48'-linked ubiquitin from imd. Also promotes imd degradation probably by binding to imd and enhancing its association with the proteasome. The chain is Ubiquitin carboxyl-terminal hydrolase Usp2 from Drosophila melanogaster (Fruit fly).